A 563-amino-acid polypeptide reads, in one-letter code: MRLEELKRLQNPLEQVNDGKYSFENHQLAMDAENNIEKYPLNLQPLESKVKIIQRAWREYLQRQEPLGKRSPSPPSVSSEKLSSSVSMNTFSDSSTPDYREDGMDLGSDAGSSSSSSRASSQSNSTKVTPCSECKSSSSPGGSLDLVSALEDYEEPFPVYQKKVIDEWAPEEDGEEEEEEDERDQRGYRDDRSPAREPGDVSARTRSGGGGGRSATTAMPPPVPNGNLHQHDPQDLRHNGNVVVAGRPSCSRGPRRAIQKPQPAGGRRSGRGPAAGGLCLQPPDGGTCVPEEPPVPPMDWEALEKHLAGLQFREQEVRNQGQARTNSTSAQKNERESIRQKLALGSFFDDGPGIYTSCSKSGKPSLSSRLQSGMNLQICFVNDSGSDKDSDADDSKTETSLDTPLSPMSKQSSSYSDRDTTEEESESLDDMDFLTRQKKLQAEAKMALAMAKPMAKMQVEVEKQNRKKSPVADLLPHMPHISECLMKRSLKPTDLRDMTIGQLQVIVNDLHSQIESLNEELVQLLLIRDELHTEQDAMLVDIEDLTRHAESQQKHMAEKMPAK.

The 21-residue stretch at 47-67 (ESKVKIIQRAWREYLQRQEPL) folds into the IQ domain. Disordered stretches follow at residues 63–150 (RQEP…VSAL), 164–295 (VIDE…EPPV), 312–336 (FREQ…NERE), and 384–430 (SGSD…SLDD). Positions 76-87 (SVSSEKLSSSVS) are enriched in low complexity. A compositionally biased stretch (polar residues) spans 88 to 97 (MNTFSDSSTP). Over residues 108–143 (SDAGSSSSSSRASSQSNSTKVTPCSECKSSSSPGGS) the composition is skewed to low complexity. The span at 168 to 182 (WAPEEDGEEEEEEDE) shows a compositional bias: acidic residues. Composition is skewed to basic and acidic residues over residues 183–199 (RDQR…REPG) and 229–238 (HQHDPQDLRH). Position 193 is a phosphoserine (Ser-193). The span at 318-331 (RNQGQARTNSTSAQ) shows a compositional bias: polar residues. Positions 385 to 399 (GSDKDSDADDSKTET) are enriched in basic and acidic residues. Residues 400–411 (SLDTPLSPMSKQ) are compositionally biased toward polar residues. A required for interaction with ankyrins region spans residues 419–563 (DTTEEESESL…KHMAEKMPAK (145 aa)). The segment covering 420–430 (TTEEESESLDD) has biased composition (acidic residues). Residues 500-534 (IGQLQVIVNDLHSQIESLNEELVQLLLIRDELHTE) adopt a coiled-coil conformation.

As to quaternary structure, homooligomer (via coiled coil domain). Interacts (via IQ domain) with calmodulin; the interaction is direct and lost in presence of calcium. Interacts with ANK3 (via ANK repeats); required for localization at axon initial segments (AIS) and nodes of Ranvier. Interacts with SPTBN4. Interacts with KCNQ2 and KCNQ3. Highly expressed in brain and to a lower extent in heart and kidney.

Its subcellular location is the cell projection. It localises to the axon. The protein resides in the cytoplasm. In terms of biological role, may play a role in action potential conduction in myelinated cells through the organization of molecular complexes at nodes of Ranvier and axon initial segments. May also play a role in axon outgrowth and guidance. This Homo sapiens (Human) protein is IQCJ-SCHIP1 readthrough transcript protein.